The chain runs to 266 residues: Large ribosomal subunit protein eL8 (266 aa).

The span at P104–T130 shows a compositional bias: basic and acidic residues. The tract at residues P104–V135 is disordered.

The protein belongs to the eukaryotic ribosomal protein eL8 family. As to quaternary structure, component of the large ribosomal subunit.

The protein resides in the cytoplasm. Functionally, component of the large ribosomal subunit. The ribosome is a large ribonucleoprotein complex responsible for the synthesis of proteins in the cell. The sequence is that of Large ribosomal subunit protein eL8 (RPL7A) from Gallus gallus (Chicken).